Reading from the N-terminus, the 430-residue chain is Probable WRKY transcription factor 14 (430 aa).

Positions 211 to 277 (SGEVVPSDLW…YTSEHNHPWP (67 aa)) form a DNA-binding region, WRKY. Residues 283–366 (LAGSTRSSTS…APYRPELHDH (84 aa)) are disordered. Over residues 286-306 (STRSSTSSSSNPNPSKPSTAN) the composition is skewed to low complexity. Residues 307 to 319 (VNSSSIGSQNTIY) show a composition bias toward polar residues. Residues 340–354 (GDDMELENVDDDDDN) are compositionally biased toward acidic residues.

Belongs to the WRKY group II-e family.

The protein resides in the nucleus. In terms of biological role, transcription factor. Interacts specifically with the W box (5'-(T)TGAC[CT]-3'), a frequently occurring elicitor-responsive cis-acting element. The protein is Probable WRKY transcription factor 14 (WRKY14) of Arabidopsis thaliana (Mouse-ear cress).